The sequence spans 316 residues: Acetyl-coenzyme A carboxylase carboxyl transferase subunit alpha (316 aa).

In terms of domain architecture, CoA carboxyltransferase C-terminal spans 36 to 290 (KLEQKLDSLK…KQFLVEQLHI (255 aa)).

Belongs to the AccA family. Acetyl-CoA carboxylase is a heterohexamer composed of biotin carboxyl carrier protein (AccB), biotin carboxylase (AccC) and two subunits each of ACCase subunit alpha (AccA) and ACCase subunit beta (AccD).

It localises to the cytoplasm. It carries out the reaction N(6)-carboxybiotinyl-L-lysyl-[protein] + acetyl-CoA = N(6)-biotinyl-L-lysyl-[protein] + malonyl-CoA. It functions in the pathway lipid metabolism; malonyl-CoA biosynthesis; malonyl-CoA from acetyl-CoA: step 1/1. Its function is as follows. Component of the acetyl coenzyme A carboxylase (ACC) complex. First, biotin carboxylase catalyzes the carboxylation of biotin on its carrier protein (BCCP) and then the CO(2) group is transferred by the carboxyltransferase to acetyl-CoA to form malonyl-CoA. The protein is Acetyl-coenzyme A carboxylase carboxyl transferase subunit alpha of Protochlamydia amoebophila (strain UWE25).